The primary structure comprises 558 residues: Potassium-transporting ATPase potassium-binding subunit 1 (558 aa).

12 consecutive transmembrane segments (helical) span residues Met1–Leu21, Phe66–Leu86, Met127–Ala147, Ile166–Met186, Ile245–Leu265, Ala281–Trp301, Phe327–Val347, Leu354–Gly374, Val377–Val397, Ile416–Met436, Ile482–Ile502, and Ile531–Ile551.

Belongs to the KdpA family. In terms of assembly, the system is composed of three essential subunits: KdpA, KdpB and KdpC.

It is found in the cell membrane. Part of the high-affinity ATP-driven potassium transport (or Kdp) system, which catalyzes the hydrolysis of ATP coupled with the electrogenic transport of potassium into the cytoplasm. This subunit binds the extracellular potassium ions and delivers the ions to the membrane domain of KdpB through an intramembrane tunnel. The polypeptide is Potassium-transporting ATPase potassium-binding subunit 1 (Staphylococcus aureus (strain MRSA252)).